Consider the following 414-residue polypeptide: Heterogeneous nuclear ribonucleoprotein F (414 aa).

Methionine 1 carries the post-translational modification N-acetylmethionine. Methionine 2 bears the N-acetylmethionine; in Heterogeneous nuclear ribonucleoprotein F, N-terminally processed mark. Residues 11–90 (FVVKLRGLPW…RYIEVFKSHR (80 aa)) enclose the RRM 1 domain. Lysine 72 participates in a covalent cross-link: Glycyl lysine isopeptide (Lys-Gly) (interchain with G-Cter in SUMO). Residues 81–86 (RYIEVF) are interaction with RNA. Lysine 87 participates in a covalent cross-link: Glycyl lysine isopeptide (Lys-Gly) (interchain with G-Cter in SUMO2). Serine 104 and serine 161 each carry phosphoserine. Residues 111-188 (GFVRLRGLPF…RYIEVFKSSQ (78 aa)) enclose the RRM 2 domain. Residue lysine 167 forms a Glycyl lysine isopeptide (Lys-Gly) (interchain with G-Cter in SUMO2) linkage. Positions 179-184 (RYIEVF) are interaction with RNA. Lysine 185 participates in a covalent cross-link: Glycyl lysine isopeptide (Lys-Gly) (interchain with G-Cter in SUMO2). Phosphoserine is present on residues serine 187, serine 193, and serine 195. Lysine 200 bears the N6-acetyllysine; alternate mark. Residue lysine 200 forms a Glycyl lysine isopeptide (Lys-Gly) (interchain with G-Cter in SUMO2); alternate linkage. Threonine 215 bears the Phosphothreonine mark. Lysine 224 carries the post-translational modification N6-acetyllysine; alternate. A Glycyl lysine isopeptide (Lys-Gly) (interchain with G-Cter in SUMO2); alternate cross-link involves residue lysine 224. Serine 265 carries the post-translational modification Phosphoserine. The RRM 3 domain occupies 289–366 (HCVHMRGLPY…IELFLNSTTG (78 aa)). Positions 355–360 (RYIELF) are interaction with RNA.

Identified in the spliceosome C complex. Interacts with AGO1, AGO2, TBP and TXNL4/DIM1. In terms of processing, sumoylated.

The protein localises to the nucleus. It is found in the nucleoplasm. In terms of biological role, component of the heterogeneous nuclear ribonucleoprotein (hnRNP) complexes which provide the substrate for the processing events that pre-mRNAs undergo before becoming functional, translatable mRNAs in the cytoplasm. Plays a role in the regulation of alternative splicing events. Binds G-rich sequences in pre-mRNAs and keeps target RNA in an unfolded state. The sequence is that of Heterogeneous nuclear ribonucleoprotein F (HNRNPF) from Bos taurus (Bovine).